Here is a 1422-residue protein sequence, read N- to C-terminus: YEATS domain-containing protein 2 (1422 aa).

A Glycyl lysine isopeptide (Lys-Gly) (interchain with G-Cter in SUMO2) cross-link involves residue lysine 9. Residues 47-80 (KEQFALEMKNKEHEIEVIDQRLIEARRMMDKLRA) adopt a coiled-coil conformation. Lysine 113 participates in a covalent cross-link: Glycyl lysine isopeptide (Lys-Gly) (interchain with G-Cter in SUMO2). A disordered region spans residues 117–198 (ESPSRSSSPA…KTEQRNADLT (82 aa)). Serine 118, serine 120, and serine 157 each carry phosphoserine. Polar residues predominate over residues 119 to 148 (PSRSSSPANQRAETPSANHSESDSLSQHND). Basic and acidic residues predominate over residues 149–165 (FLSDKDNNSNMDIEERL). Residues 166–176 (SNNMEQRPSRN) are compositionally biased toward polar residues. Positions 177-198 (TGRDTSRITGSHKTEQRNADLT) are enriched in basic and acidic residues. Lysine 189 participates in a covalent cross-link: Glycyl lysine isopeptide (Lys-Gly) (interchain with G-Cter in SUMO2). In terms of domain architecture, YEATS spans 200 to 345 (ETSRLFVKKT…EDCIYPQSSE (146 aa)). Histone H3K27cr binding regions lie at residues 259–261 (HPS) and 282–284 (WGE). Lysine 370 participates in a covalent cross-link: Glycyl lysine isopeptide (Lys-Gly) (interchain with G-Cter in SUMO2). Threonine 407 carries the post-translational modification Phosphothreonine. Serine 447, serine 463, serine 465, serine 471, and serine 473 each carry phosphoserine. The interval 465–486 (SPISTPSPSPLPRTPTSTPVHV) is disordered. Threonine 478 bears the Phosphothreonine mark. A Glycyl lysine isopeptide (Lys-Gly) (interchain with G-Cter in SUMO2) cross-link involves residue lysine 487. The span at 513–535 (TTPSTGSPTNKISTASQVSQGTG) shows a compositional bias: polar residues. The segment at 513–540 (TTPSTGSPTNKISTASQVSQGTGSPVPK) is disordered. Serine 536 bears the Phosphoserine mark. A Glycyl lysine isopeptide (Lys-Gly) (interchain with G-Cter in SUMO2) cross-link involves residue lysine 552. Residue serine 575 is modified to Phosphoserine. Residue lysine 592 forms a Glycyl lysine isopeptide (Lys-Gly) (interchain with G-Cter in SUMO2) linkage. Serine 627 carries the post-translational modification Phosphoserine. Residues lysine 649 and lysine 773 each participate in a glycyl lysine isopeptide (Lys-Gly) (interchain with G-Cter in SUMO2) cross-link. The segment at 794-842 (GSAASGGSGAGGGGGGGGGGGSGSGGGGSTGGGGGTAGGGTQSTAGPGG) is disordered. The span at 797–842 (ASGGSGAGGGGGGGGGGGSGSGGGGSTGGGGGTAGGGTQSTAGPGG) shows a compositional bias: gly residues. Residue lysine 923 forms a Glycyl lysine isopeptide (Lys-Gly) (interchain with G-Cter in SUMO2) linkage. Lysine 1110 is covalently cross-linked (Glycyl lysine isopeptide (Lys-Gly) (interchain with G-Cter in SUMO1); alternate). A Glycyl lysine isopeptide (Lys-Gly) (interchain with G-Cter in SUMO2); alternate cross-link involves residue lysine 1110. Lysine 1130 is covalently cross-linked (Glycyl lysine isopeptide (Lys-Gly) (interchain with G-Cter in SUMO2)). Threonine 1219 carries the phosphothreonine modification. Glycyl lysine isopeptide (Lys-Gly) (interchain with G-Cter in SUMO2) cross-links involve residues lysine 1222 and lysine 1285.

Component of the ADA2A-containing complex (ATAC), composed of KAT14, KAT2A, TADA2L, TADA3L, ZZ3, MBIP, WDR5, YEATS2, SGF29 and DR1.

It is found in the nucleus. Functionally, chromatin reader component of the ATAC complex, a complex with histone acetyltransferase activity on histones H3 and H4. YEATS2 specifically recognizes and binds histone H3 crotonylated at 'Lys-27' (H3K27cr). Crotonylation marks active promoters and enhancers and confers resistance to transcriptional repressors. In Homo sapiens (Human), this protein is YEATS domain-containing protein 2.